A 267-amino-acid polypeptide reads, in one-letter code: L-aspartate dehydrogenase (267 aa).

Residues Ala-124 and Asn-190 each coordinate NAD(+). His-220 is an active-site residue.

Belongs to the L-aspartate dehydrogenase family.

It carries out the reaction L-aspartate + NADP(+) + H2O = oxaloacetate + NH4(+) + NADPH + H(+). It catalyses the reaction L-aspartate + NAD(+) + H2O = oxaloacetate + NH4(+) + NADH + H(+). It participates in cofactor biosynthesis; NAD(+) biosynthesis; iminoaspartate from L-aspartate (dehydrogenase route): step 1/1. Its function is as follows. Specifically catalyzes the NAD or NADP-dependent dehydrogenation of L-aspartate to iminoaspartate. The chain is L-aspartate dehydrogenase from Polaromonas sp. (strain JS666 / ATCC BAA-500).